A 102-amino-acid chain; its full sequence is Class II hydrophobin 3 (102 aa).

The first 16 residues, 1 to 16, serve as a signal peptide directing secretion; the sequence is MQFLAVAALLFTTALA. Cystine bridges form between cysteine 33–cysteine 83, cysteine 44–cysteine 74, cysteine 45–cysteine 57, and cysteine 84–cysteine 95.

This sequence belongs to the cerato-ulmin hydrophobin family. As to quaternary structure, homotetramer. Further self-assembles to form highly ordered films at water-air interfaces through intermolecular interactions. Expressed in the conidia, vegetative growth and induction growth stages.

The protein localises to the secreted. The protein resides in the cell wall. It localises to the cytoplasm. Functionally, aerial growth, conidiation, and dispersal of filamentous fungi in the environment rely upon a capability of their secreting small amphipathic proteins called hydrophobins (HPBs) with low sequence identity. Class I can self-assemble into an outermost layer of rodlet bundles on aerial cell surfaces, conferring cellular hydrophobicity that supports fungal growth, development and dispersal; whereas Class II form highly ordered films at water-air interfaces through intermolecular interactions but contribute nothing to the rodlet structure. Hbf3 is a class II hydrophobin that has a role in vegetative growth and asexual development. This chain is Class II hydrophobin 3, found in Hypocrea jecorina (strain QM6a) (Trichoderma reesei).